We begin with the raw amino-acid sequence, 1273 residues long: DNA-directed RNA polymerase subunit beta (1273 aa).

Belongs to the RNA polymerase beta chain family. The RNAP catalytic core consists of 2 alpha, 1 beta, 1 beta' and 1 omega subunit. When a sigma factor is associated with the core the holoenzyme is formed, which can initiate transcription.

The catalysed reaction is RNA(n) + a ribonucleoside 5'-triphosphate = RNA(n+1) + diphosphate. Its function is as follows. DNA-dependent RNA polymerase catalyzes the transcription of DNA into RNA using the four ribonucleoside triphosphates as substrates. In Aster yellows witches'-broom phytoplasma (strain AYWB), this protein is DNA-directed RNA polymerase subunit beta.